A 225-amino-acid chain; its full sequence is Late embryogenesis abundant protein 29 (225 aa).

Disordered stretches follow at residues methionine 1–leucine 167 and threonine 193–lysine 225. 4 stretches are compositionally biased toward basic and acidic residues: residues methionine 28 to threonine 39, lysine 49 to threonine 61, lysine 71 to threonine 83, and lysine 93 to alanine 119. LEA 11-mer repeat repeat units lie at residues threonine 53 to glutamine 63, threonine 75 to glutamine 85, and threonine 97 to glutamine 107. Residues threonine 141–lysine 153 show a composition bias toward polar residues. Residues glutamate 154–threonine 163 are compositionally biased toward basic and acidic residues. Low complexity predominate over residues threonine 205–lysine 225.

It belongs to the LEA type 4 family.

Its subcellular location is the cytoplasm. It localises to the cytosol. In terms of biological role, involved dehydration tolerance. The sequence is that of Late embryogenesis abundant protein 29 from Arabidopsis thaliana (Mouse-ear cress).